Here is a 546-residue protein sequence, read N- to C-terminus: Apolipoprotein N-acyltransferase 1 (546 aa).

Helical transmembrane passes span 14 to 34, 41 to 61, 62 to 82, 85 to 105, 122 to 142, 151 to 171, and 194 to 214; these read FLLF…PLLP, AYGA…FAVV, FWGG…LFVF, VALC…CLAL, LVWL…PYGV, LPLI…LVVF, and FLSA…LCGF. The CN hydrolase domain occupies 233–502; it reads AKVALVQPNG…PGVLVADVPI (270 aa). The active-site Proton acceptor is the Glu280. Lys361 is a catalytic residue. Cys413 acts as the Nucleophile in catalysis. A helical membrane pass occupies residues 514–534; the sequence is GDALGVFFCVASLFILIAGGV.

This sequence belongs to the CN hydrolase family. Apolipoprotein N-acyltransferase subfamily.

Its subcellular location is the cell inner membrane. It carries out the reaction N-terminal S-1,2-diacyl-sn-glyceryl-L-cysteinyl-[lipoprotein] + a glycerophospholipid = N-acyl-S-1,2-diacyl-sn-glyceryl-L-cysteinyl-[lipoprotein] + a 2-acyl-sn-glycero-3-phospholipid + H(+). Its pathway is protein modification; lipoprotein biosynthesis (N-acyl transfer). Catalyzes the phospholipid dependent N-acylation of the N-terminal cysteine of apolipoprotein, the last step in lipoprotein maturation. This chain is Apolipoprotein N-acyltransferase 1, found in Treponema pallidum (strain Nichols).